The sequence spans 904 residues: Auxilin-related protein 1 (904 aa).

Disordered regions lie at residues 46 to 99 (AAGK…FDYD), 150 to 731 (SSIS…NLRK), and 749 to 776 (SASQSGGFQDVDGETEERRRARLERHQR). Over residues 59-69 (DPGRDGDDLLF) the composition is skewed to basic and acidic residues. Positions 81–95 (YGSSSGDSRSPSAPA) are enriched in low complexity. Residues 178 to 188 (KGADSDREEKG) are compositionally biased toward basic and acidic residues. Low complexity predominate over residues 201-215 (RTSSPPSKRTTSETT). Acidic residues predominate over residues 232–244 (VEEDPFVVLEESE). A compositionally biased stretch (basic and acidic residues) spans 245-271 (STPREPSRTDPLDDIGKFNSRKTDHSS). The segment covering 370-383 (SAPPPTRPPPPRPT) has biased composition (pro residues). Polar residues predominate over residues 394–419 (SIPTSAYHSHVPSSGRASVNSPTASQ). The stretch at 456-663 (SAAAMKDAMD…AAAEARGRAA (208 aa)) forms a coiled coil. 2 stretches are compositionally biased toward basic and acidic residues: residues 462–570 (DAMD…EAHA) and 581–660 (TDAR…EARG). In terms of domain architecture, R spans 619–640 (REKAEKAAAEAKERANAEAREK). Residues 661–673 (RAAAQAKAKQQQE) show a composition bias toward low complexity. Residues 674-697 (NTNDLDSFFSSISRPNSAPRQRTN) show a composition bias toward polar residues. Positions 762–804 (ETEERRRARLERHQRTQERAAKALAEKNERDLQVQREQVEKDR) form a coiled coil. Over residues 764 to 776 (EERRRARLERHQR) the composition is skewed to basic and acidic residues. The J domain maps to 839 to 904 (CGWQPVSLTD…WNKFNSEELF (66 aa)).

In terms of assembly, interacts with SH3P1.

The protein localises to the cell membrane. Its subcellular location is the golgi apparatus. It localises to the trans-Golgi network. The protein resides in the endoplasmic reticulum. It is found in the cytoplasmic vesicle. Its function is as follows. Promotes uncoating of clathrin-coated vesicles. May interact directly with clathrin. This chain is Auxilin-related protein 1, found in Arabidopsis thaliana (Mouse-ear cress).